The following is a 145-amino-acid chain: D-aminoacyl-tRNA deacylase (145 aa).

Residues 137–138 (GP) carry the Gly-cisPro motif, important for rejection of L-amino acids motif.

This sequence belongs to the DTD family. Homodimer.

It localises to the cytoplasm. The enzyme catalyses glycyl-tRNA(Ala) + H2O = tRNA(Ala) + glycine + H(+). It catalyses the reaction a D-aminoacyl-tRNA + H2O = a tRNA + a D-alpha-amino acid + H(+). Functionally, an aminoacyl-tRNA editing enzyme that deacylates mischarged D-aminoacyl-tRNAs. Also deacylates mischarged glycyl-tRNA(Ala), protecting cells against glycine mischarging by AlaRS. Acts via tRNA-based rather than protein-based catalysis; rejects L-amino acids rather than detecting D-amino acids in the active site. By recycling D-aminoacyl-tRNA to D-amino acids and free tRNA molecules, this enzyme counteracts the toxicity associated with the formation of D-aminoacyl-tRNA entities in vivo and helps enforce protein L-homochirality. The chain is D-aminoacyl-tRNA deacylase from Shewanella halifaxensis (strain HAW-EB4).